A 283-amino-acid chain; its full sequence is 4-diphosphocytidyl-2-C-methyl-D-erythritol kinase (283 aa).

The active site involves lysine 10. An ATP-binding site is contributed by 99–109; sequence PMGGGLGGGSS. Residue aspartate 141 is part of the active site.

The protein belongs to the GHMP kinase family. IspE subfamily. Homodimer.

It carries out the reaction 4-CDP-2-C-methyl-D-erythritol + ATP = 4-CDP-2-C-methyl-D-erythritol 2-phosphate + ADP + H(+). It functions in the pathway isoprenoid biosynthesis; isopentenyl diphosphate biosynthesis via DXP pathway; isopentenyl diphosphate from 1-deoxy-D-xylulose 5-phosphate: step 3/6. Catalyzes the phosphorylation of the position 2 hydroxy group of 4-diphosphocytidyl-2C-methyl-D-erythritol. The sequence is that of 4-diphosphocytidyl-2-C-methyl-D-erythritol kinase from Citrobacter koseri (strain ATCC BAA-895 / CDC 4225-83 / SGSC4696).